A 778-amino-acid polypeptide reads, in one-letter code: MEPTYSIPSTPLKTPIRITVNNGHNSGQHSLSLSTCKPTPEQNAFNLNMFSEKKKNQYQTPKCPSPPLKSTPASRVNSNLPLIHHISSLSMFSPTTSLSDFMNCENGGSNNIDFSSSFGSSSLNSNNTLSINNNNNNNNNNGGYKIPSSVNKNSNNYNSNSNSNSSNNVISLFDKNFDVVCKLGSGSFSDVFKVKSKFDGNSYAIKQARHQFRGFQERERAVREVKAAVSLPPHTNVLQYYSSWEQNNTLFIQTELCENGSLQDFLDSLSPDQILSEELIWNFLLDVCLGIQHIHSYNMLHLDIKPENLFISSQGNIKIGDFGMAVKLETTNNNNNGNGGCQSNNTSMDSDCNNLSLDEDDIFFDFLEGDSRYLAYEFLLDKKQISKPSDIFSIGVTFFEMVTGNEMPTNGPLWEQLRSDKAIDFLEPGKYSDSLYQVILDMMKSNITERISLDQILLNENIQLVQQKRLNQFQNIDNIENDNNNNNNTDNNNNNNTDNINNDNNDDNNNNINNYNLKLITPYFQYQKERKDEELKEIIEFGEIREIKEKFEHHQFAIPTPHFVRSNAGRSSSSSLFSDEEEDDDDDDDSGRDSPIHFSLNNLNNSSSNIGISESNSNNSFSSILEENNESSSSSPLPSLSFSRRLSTSSLVTTISPKPNFNTSGNKLFSNENNNSNNNNNNNNNNQNNNNNNGFYGFTNNGSCNNLNNLNNLNSSGEFSNSSKKKLGKRGLPLLDVVNGGGNSGSKVCAIKRSFDSHPQESDKMSPRNLLSLFQETN.

The tract at residues 129-162 (LSINNNNNNNNNNGGYKIPSSVNKNSNNYNSNSN) is disordered. The Protein kinase domain occupies 177–462 (FDVVCKLGSG…LDQILLNENI (286 aa)). ATP is bound by residues 183–191 (LGSGSFSDV) and K206. D303 (proton acceptor) is an active-site residue. Residues N308 and D321 each coordinate Mg(2+). Disordered stretches follow at residues 478 to 509 (NIEN…DDNN), 562 to 697 (HFVR…GFYG), and 757 to 778 (SHPQ…QETN). Positions 578–590 (SDEEEDDDDDDDS) are enriched in acidic residues. Over residues 599 to 651 (SLNNLNNSSSNIGISESNSNNSFSSILEENNESSSSSPLPSLSFSRRLSTSSL) the composition is skewed to low complexity. Over residues 652–670 (VTTISPKPNFNTSGNKLFS) the composition is skewed to polar residues. The span at 671–693 (NENNNSNNNNNNNNNNQNNNNNN) shows a compositional bias: low complexity. The span at 757–766 (SHPQESDKMS) shows a compositional bias: basic and acidic residues.

Belongs to the protein kinase superfamily. Ser/Thr protein kinase family. WEE1 subfamily.

The enzyme catalyses L-seryl-[protein] + ATP = O-phospho-L-seryl-[protein] + ADP + H(+). It catalyses the reaction L-threonyl-[protein] + ATP = O-phospho-L-threonyl-[protein] + ADP + H(+). This chain is Probable protein kinase DDB_G0291133, found in Dictyostelium discoideum (Social amoeba).